We begin with the raw amino-acid sequence, 184 residues long: Peptide deformylase (184 aa).

Fe cation-binding residues include cysteine 111 and histidine 154. Residue glutamate 155 is part of the active site. Histidine 158 contacts Fe cation.

It belongs to the polypeptide deformylase family. Requires Fe(2+) as cofactor.

It carries out the reaction N-terminal N-formyl-L-methionyl-[peptide] + H2O = N-terminal L-methionyl-[peptide] + formate. In terms of biological role, removes the formyl group from the N-terminal Met of newly synthesized proteins. Requires at least a dipeptide for an efficient rate of reaction. N-terminal L-methionine is a prerequisite for activity but the enzyme has broad specificity at other positions. This Lactobacillus delbrueckii subsp. bulgaricus (strain ATCC 11842 / DSM 20081 / BCRC 10696 / JCM 1002 / NBRC 13953 / NCIMB 11778 / NCTC 12712 / WDCM 00102 / Lb 14) protein is Peptide deformylase.